The following is a 614-amino-acid chain: UvrABC system protein C (614 aa).

Positions 16 to 94 constitute a GIY-YIG domain; sequence SRPGVYRMFG…VKSLKPRFNV (79 aa). One can recognise a UVR domain in the interval 204–239; sequence GELQKRLASEMEAASEAMEFETAARLRDRIRAIAHV.

It belongs to the UvrC family. As to quaternary structure, interacts with UvrB in an incision complex.

It localises to the cytoplasm. The UvrABC repair system catalyzes the recognition and processing of DNA lesions. UvrC both incises the 5' and 3' sides of the lesion. The N-terminal half is responsible for the 3' incision and the C-terminal half is responsible for the 5' incision. This Hyphomonas neptunium (strain ATCC 15444) protein is UvrABC system protein C.